Consider the following 310-residue polypeptide: Olfactory receptor 4C16 (310 aa).

Topologically, residues 1–23 (MQLNNNVTEFILLGLTQDPFWKK) are extracellular. An N-linked (GlcNAc...) asparagine glycan is attached at Asn-6. The helical transmembrane segment at 24–47 (IVFVIFLRLYLGTLLGNLLIIISV) threads the bilayer. The Cytoplasmic portion of the chain corresponds to 48–55 (KTSQALKN). A helical transmembrane segment spans residues 56 to 77 (PMFFFLFYLSLSDTCLSTSITP). Residues 78–98 (RMIVDALLKKTTISFSECMIQ) lie on the Extracellular side of the membrane. A disulfide bridge links Cys-95 with Cys-187. The chain crosses the membrane as a helical span at residues 99-118 (VFSSHVFGCLEIFILILTAV). The Cytoplasmic portion of the chain corresponds to 119–137 (DRYVDICKPLHYMTIISQW). The chain crosses the membrane as a helical span at residues 138–156 (VCGVLMAVAWVGSCVHSLV). Residues 157–193 (QIFLALSLPFCGPNVINHCFCDLQPLLKQACSETYVV) lie on the Extracellular side of the membrane. A helical transmembrane segment spans residues 194-217 (NLLLVSNSGAICAVSYVMLIFSYV). At 218-233 (IFLHSLRNHSAEVIKK) the chain is on the cytoplasmic side. Residues 234-256 (ALSTCVSHIIVVILFFGPCIFMY) form a helical membrane-spanning segment. Over 257–267 (TCLATVFPMDK) the chain is Extracellular. Residues 268–287 (MIAVFYTVGTSFLNPVIYTL) traverse the membrane as a helical segment. At 288-310 (KNTEVKSAMRKLWSKKLITDDKR) the chain is on the cytoplasmic side.

The protein belongs to the G-protein coupled receptor 1 family.

It localises to the cell membrane. In terms of biological role, odorant receptor. The polypeptide is Olfactory receptor 4C16 (OR4C16) (Homo sapiens (Human)).